The chain runs to 582 residues: Leucine-rich repeat protein SHOC-2 (582 aa).

Composition is skewed to basic and acidic residues over residues 1 to 29 (MSSSLGKEKDSKEKDPKVPSAKEREKESK) and 36 to 57 (KESKEKEPKAKGKDAKDGKKES). The interval 1–88 (MSSSLGKEKD…PGTRKKSSNA (88 aa)) is disordered. The RVxF motif; important for interaction with PP1c signature appears at 63–66 (GVAF). LRR repeat units follow at residues 101 to 122 (NSMRLDLSKRSIHILPPSVKEL), 124 to 145 (QLTELYLYSNKLQSLPAEVGCL), 147 to 169 (NLMTLALSENSLTSLPDSLDNLK), 170 to 191 (KLRMLDLRHNKLREIPSVVYRL), 193 to 215 (SLTTLYLRFNRITTVEKDIKNLP), 216 to 237 (KLSMLSIRENKIKQLPAEIGEL), 239 to 260 (NLITLDVAHNQLEHLPKEIGNC), 262 to 283 (QITNLDLQHNDLLDLPDTIGNL), 285 to 307 (SLNRLGLRYNRLSAIPRSLAKCS), 308 to 329 (ALEELNLENNNISTLPESLLSS), 332 to 353 (KLNSLTLARNCFQLYPVGGPSQ), 356 to 377 (TIYSLNMEHNRINKIPFGIFSR), 380 to 400 (VLSKLNMKDNQLTSLPLDFGT), 403 to 424 (SMVELNLATNQLTKIPEDVSGL), 426 to 448 (SLEVLILSNNLLKKLPHGLGNLR), 449 to 470 (KLRELDLEENKLESLPNEIAYL), 472 to 494 (DLQKLVLTNNQLSTLPRGIGHLT), 495 to 516 (NLTHLGLGENLLTHLPEEIGTL), 518 to 540 (NLEELYLNDNPNLHSLPFELALC), and 542 to 563 (KLSIMSIENCPLSHLPPQIVAG).

Belongs to the SHOC2 family. In terms of assembly, component of the SHOC2-MRAS-PP1c (SMP) complex consisting of SHOC2, GTP-bound M-Ras/MRAS and the catalytic subunit of protein phosphatase 1 (either PPP1CA, PPP1CB or PPP1CC). SHOC2 and PP1c preferably bind M-Ras/MRAS, but they also bind K-Ras/KRAS, N-Ras/NRAS and H-Ras/HRAS; these interactions are GTP-dependent and both SHOC2 and PP1c are required to form a stable complex. Interacts with PP1c in the absence of Ras GTPases. Interacts with M-Ras/MRAS and RAF1. Interacts with ERBIN; disrupts the interaction with RAF1 and Ras, preventing the activation of the Ras signaling pathway. Interacts with LZTR1.

The protein resides in the cytoplasm. Its subcellular location is the nucleus. Its function is as follows. Core component of the SHOC2-MRAS-PP1c (SMP) holophosphatase complex that regulates activation of the MAPK pathway. Acts as a scaffolding protein in the SMP complex. The SMP complex specifically dephosphorylates the inhibitory phosphorylation at 'Ser-259' of RAF1 kinase, 'Ser-365' of BRAF kinase and 'Ser-214' of ARAF kinase, stimulating their kinase activities. The SMP complex enhances the dephosphorylation activity and substrate specificity of PP1c. The chain is Leucine-rich repeat protein SHOC-2 (Shoc2) from Mus musculus (Mouse).